The primary structure comprises 339 residues: Probable G-protein coupled receptor 33 (339 aa).

Residues Met-1 to Ala-30 lie on the Extracellular side of the membrane. N-linked (GlcNAc...) asparagine glycosylation is found at Asn-5 and Asn-19. Residues Ile-31–Met-53 form a helical membrane-spanning segment. Topologically, residues Leu-54–Thr-64 are cytoplasmic. The chain crosses the membrane as a helical span at residues Leu-65–Thr-86. The Extracellular portion of the chain corresponds to Ser-87–Val-103. Cysteines 101 and 179 form a disulfide. Residues Phe-104 to Val-124 traverse the membrane as a helical segment. Over Asp-125 to Arg-143 the chain is Cytoplasmic. Residues Trp-144–Val-165 traverse the membrane as a helical segment. At Phe-166–Arg-209 the chain is on the extracellular side. The helical transmembrane segment at Phe-210 to Thr-230 threads the bilayer. The Cytoplasmic segment spans residues Lys-231 to Val-246. A helical transmembrane segment spans residues Met-247–Val-268. Residues Leu-269–Leu-283 lie on the Extracellular side of the membrane. Residues Ala-284–Gly-303 form a helical membrane-spanning segment. Topologically, residues Glu-304 to Ile-339 are cytoplasmic.

Belongs to the G-protein coupled receptor 1 family.

The protein resides in the cell membrane. Orphan receptor; could be a chemoattractant receptor. This chain is Probable G-protein coupled receptor 33 (Gpr33), found in Rattus rattus (Black rat).